Reading from the N-terminus, the 85-residue chain is Beta-insect depressant toxin BjIT2 (85 aa).

The N-terminal stretch at 1 to 21 (MKLLLLLVISASMLLECLVNA) is a signal peptide. The region spanning 22–82 (DGYIRKKDGC…TWKSSTNTCG (61 aa)) is the LCN-type CS-alpha/beta domain. Disulfide bonds link C31/C81, C35/C56, C42/C63, and C46/C65. Residues 83–85 (RKK) constitute a propeptide, removed by a carboxypeptidase.

The protein belongs to the long (4 C-C) scorpion toxin superfamily. Sodium channel inhibitor family. Beta subfamily. C-terminal basic residues are removed by a carboxypeptidase. Expressed by the venom gland.

The protein localises to the secreted. Its function is as follows. Depressant insect beta-toxins cause a transient contraction paralysis followed by a slow flaccid paralysis. They bind voltage-independently at site-4 of sodium channels (Nav) and shift the voltage of activation toward more negative potentials thereby affecting sodium channel activation and promoting spontaneous and repetitive firing. This toxin is active only on insects. In Hottentotta judaicus (Black scorpion), this protein is Beta-insect depressant toxin BjIT2.